We begin with the raw amino-acid sequence, 428 residues long: 3-phosphoshikimate 1-carboxyvinyltransferase (428 aa).

3 residues coordinate 3-phosphoshikimate: Lys-21, Ser-22, and Arg-26. Lys-21 lines the phosphoenolpyruvate pocket. Positions 93 and 121 each coordinate phosphoenolpyruvate. The 3-phosphoshikimate site is built by Ser-166, Gln-168, Asp-314, and Lys-341. Gln-168 contributes to the phosphoenolpyruvate binding site. The active-site Proton acceptor is Asp-314. Phosphoenolpyruvate contacts are provided by Arg-345 and Arg-388.

The protein belongs to the EPSP synthase family. Monomer.

Its subcellular location is the cytoplasm. The catalysed reaction is 3-phosphoshikimate + phosphoenolpyruvate = 5-O-(1-carboxyvinyl)-3-phosphoshikimate + phosphate. It participates in metabolic intermediate biosynthesis; chorismate biosynthesis; chorismate from D-erythrose 4-phosphate and phosphoenolpyruvate: step 6/7. Its function is as follows. Catalyzes the transfer of the enolpyruvyl moiety of phosphoenolpyruvate (PEP) to the 5-hydroxyl of shikimate-3-phosphate (S3P) to produce enolpyruvyl shikimate-3-phosphate and inorganic phosphate. This is 3-phosphoshikimate 1-carboxyvinyltransferase from Syntrophomonas wolfei subsp. wolfei (strain DSM 2245B / Goettingen).